Reading from the N-terminus, the 119-residue chain is Large ribosomal subunit protein bL19 (119 aa).

This sequence belongs to the bacterial ribosomal protein bL19 family.

In terms of biological role, this protein is located at the 30S-50S ribosomal subunit interface and may play a role in the structure and function of the aminoacyl-tRNA binding site. This Pediococcus pentosaceus (strain ATCC 25745 / CCUG 21536 / LMG 10740 / 183-1w) protein is Large ribosomal subunit protein bL19.